A 176-amino-acid polypeptide reads, in one-letter code: Large ribosomal subunit protein uL10 (176 aa).

This sequence belongs to the universal ribosomal protein uL10 family. As to quaternary structure, part of the ribosomal stalk of the 50S ribosomal subunit. The N-terminus interacts with L11 and the large rRNA to form the base of the stalk. The C-terminus forms an elongated spine to which L12 dimers bind in a sequential fashion forming a multimeric L10(L12)X complex.

In terms of biological role, forms part of the ribosomal stalk, playing a central role in the interaction of the ribosome with GTP-bound translation factors. This Thioalkalivibrio sulfidiphilus (strain HL-EbGR7) protein is Large ribosomal subunit protein uL10.